We begin with the raw amino-acid sequence, 300 residues long: Free fatty acid receptor 1 (300 aa).

The Extracellular portion of the chain corresponds to 1 to 8; that stretch reads MALSPQLF. The helical transmembrane segment at 9–31 threads the bilayer; the sequence is FALYVSAFALGFPLNLLAIRGAV. Over 32–41 the chain is Cytoplasmic; it reads ARARLRLTPN. Residues 42-64 traverse the membrane as a helical segment; it reads LVYTLHLACSDLLLAITLPVKAV. Residues 65-79 are Extracellular-facing; it reads EALASGAWPLPLPLC. Cysteine 79 and cysteine 170 are joined by a disulfide. Residues 80 to 101 traverse the membrane as a helical segment; the sequence is PVFVLVHFAPLYAGGGFLAALS. At 102 to 121 the chain is on the cytoplasmic side; that stretch reads AGRYLGAAFPFGYQAVRRPR. A helical transmembrane segment spans residues 122 to 142; the sequence is YSWGVCVAIWALVLCHMGLVL. Over 143–178 the chain is Extracellular; the sequence is GLEAPGGWLNTTSSSLGINTPVNGSPVCLEAWDPNS. Residue asparagine 152 is glycosylated (N-linked (GlcNAc...) asparagine). A helical transmembrane segment spans residues 179-200; that stretch reads ARPARLSFSILLFFVPLVITAF. Over 201–223 the chain is Cytoplasmic; the sequence is CYVGCLRALAHSGLSHKRKLRAA. The chain crosses the membrane as a helical span at residues 224-248; that stretch reads WAAGGAFLTLLLCLGPYNASNVASF. The Extracellular portion of the chain corresponds to 249–256; sequence VNPDLGGS. A helical transmembrane segment spans residues 257 to 279; it reads WRKLGLITGSWSVVLNPLVTGYL. Topologically, residues 280 to 300 are cytoplasmic; the sequence is GASPGRGTVCTTRTQGGTIQK.

Belongs to the G-protein coupled receptor 1 family.

The protein localises to the cell membrane. G-protein coupled receptor for medium and long chain saturated and unsaturated fatty acids that plays an important role in glucose homeostasis. Fatty acid binding increases glucose-stimulated insulin secretion, and may also enhance the secretion of glucagon-like peptide 1 (GLP-1). May also play a role in bone homeostasis; receptor signaling activates pathways that inhibit osteoclast differentiation. Ligand binding leads to a conformation change that triggers signaling via G-proteins that activate phospholipase C, leading to an increase of the intracellular calcium concentration. Seems to act through a G(q) and G(i)-mediated pathway. Mediates the anti-inflammatory effects of omega-3 polyunsaturated fatty acids (PUFAs) via inhibition of NLRP3 inflammasome activation. The chain is Free fatty acid receptor 1 (FFAR1) from Mesocricetus auratus (Golden hamster).